The chain runs to 231 residues: Large ribosomal subunit protein uL1 (231 aa).

Belongs to the universal ribosomal protein uL1 family. In terms of assembly, part of the 50S ribosomal subunit.

In terms of biological role, binds directly to 23S rRNA. The L1 stalk is quite mobile in the ribosome, and is involved in E site tRNA release. Functionally, protein L1 is also a translational repressor protein, it controls the translation of the L11 operon by binding to its mRNA. This Francisella tularensis subsp. tularensis (strain WY96-3418) protein is Large ribosomal subunit protein uL1.